The chain runs to 496 residues: Lysine--tRNA ligase (496 aa).

Positions 408 and 415 each coordinate Mg(2+).

This sequence belongs to the class-II aminoacyl-tRNA synthetase family. Homodimer. The cofactor is Mg(2+).

It localises to the cytoplasm. It catalyses the reaction tRNA(Lys) + L-lysine + ATP = L-lysyl-tRNA(Lys) + AMP + diphosphate. The protein is Lysine--tRNA ligase of Legionella pneumophila (strain Lens).